The sequence spans 307 residues: Exosome complex component RRP45A (307 aa).

Belongs to the RNase PH family. Expressed in roots, leaves, stems, buds and siliques.

Its subcellular location is the cytoplasm. The protein localises to the nucleus. In terms of biological role, probable 3'-&gt;5' exoribonuclease involved in the regulation of cuticular wax biosynthesis. Can perform exosomal functions and partially complement the yeast rrp45 null mutant. The polypeptide is Exosome complex component RRP45A (Arabidopsis thaliana (Mouse-ear cress)).